Consider the following 151-residue polypeptide: Mating pheromone 3 (151 aa).

A signal peptide spans 1–16 (MKAIFIILAILMVTQA). Residues 17–52 (FKMTSKVNTKLQSQIQSKFQSKNKLASTFQTSSQLK) constitute a propeptide that is removed on maturation.

The protein localises to the secreted. In terms of biological role, mating ciliate pheromones (or gamones) are diffusible extracellular communication signals that distinguish different intraspecific classes of cells commonly referred to as 'mating types'. They prepare the latter for conjugation by changing their cell surface properties. The polypeptide is Mating pheromone 3 (PHR3) (Euplotoides octocarinatus (Freshwater ciliate)).